Reading from the N-terminus, the 329-residue chain is NADH-quinone oxidoreductase subunit H (329 aa).

The next 9 membrane-spanning stretches (helical) occupy residues 9-29 (LIKI…ATYI), 42-62 (GPCY…IKLF), 75-95 (FIFT…MAPI), 117-137 (IGFL…ILAG), 154-174 (IQLL…LMVV), 188-208 (GGFL…FLIA), 238-258 (LKWG…SFVI), 269-291 (WGFI…LSMW), and 309-329 (WKIM…IILI).

This sequence belongs to the complex I subunit 1 family. In terms of assembly, NDH-1 is composed of 14 different subunits. Subunits NuoA, H, J, K, L, M, N constitute the membrane sector of the complex.

The protein localises to the cell inner membrane. The catalysed reaction is a quinone + NADH + 5 H(+)(in) = a quinol + NAD(+) + 4 H(+)(out). Functionally, NDH-1 shuttles electrons from NADH, via FMN and iron-sulfur (Fe-S) centers, to quinones in the respiratory chain. The immediate electron acceptor for the enzyme in this species is believed to be ubiquinone. Couples the redox reaction to proton translocation (for every two electrons transferred, four hydrogen ions are translocated across the cytoplasmic membrane), and thus conserves the redox energy in a proton gradient. This subunit may bind ubiquinone. This is NADH-quinone oxidoreductase subunit H from Helicobacter pylori (strain Shi470).